The following is a 297-amino-acid chain: 4-hydroxy-tetrahydrodipicolinate synthase (297 aa).

Thr-46 provides a ligand contact to pyruvate. Tyr-134 functions as the Proton donor/acceptor in the catalytic mechanism. The active-site Schiff-base intermediate with substrate is Lys-163. Ile-205 is a pyruvate binding site.

This sequence belongs to the DapA family. In terms of assembly, homotetramer; dimer of dimers.

It localises to the cytoplasm. The catalysed reaction is L-aspartate 4-semialdehyde + pyruvate = (2S,4S)-4-hydroxy-2,3,4,5-tetrahydrodipicolinate + H2O + H(+). It participates in amino-acid biosynthesis; L-lysine biosynthesis via DAP pathway; (S)-tetrahydrodipicolinate from L-aspartate: step 3/4. Catalyzes the condensation of (S)-aspartate-beta-semialdehyde [(S)-ASA] and pyruvate to 4-hydroxy-tetrahydrodipicolinate (HTPA). The sequence is that of 4-hydroxy-tetrahydrodipicolinate synthase from Thermoanaerobacter pseudethanolicus (strain ATCC 33223 / 39E) (Clostridium thermohydrosulfuricum).